Consider the following 226-residue polypeptide: MAEVIIELKSVERHYVQGPRKLTILNGADFSLKRGEMVALVAPSGTGKSTLLHTAGLLERPDAGDVILAGRACGRLSDDERTAIRRNDVGFVYQFHHLLPEFSALENIMMPQLIKGLPRKEAAERAAQLLDYMQIGKRASHRPSELSGGEQQRVAIARAVANAPLVLLADEPTGNLDPVTASYVFEALGALVKQSGLAALIATHNHELASRMDRRVTLADGKVVPL.

In terms of domain architecture, ABC transporter spans 6 to 226 (IELKSVERHY…TLADGKVVPL (221 aa)). ATP is bound at residue 42-49 (APSGTGKS).

Belongs to the ABC transporter superfamily. Lipoprotein translocase (TC 3.A.1.125) family. In terms of assembly, the complex is composed of two ATP-binding proteins (LolD) and two transmembrane proteins (LolC and LolE).

Its subcellular location is the cell inner membrane. Its function is as follows. Part of the ABC transporter complex LolCDE involved in the translocation of mature outer membrane-directed lipoproteins, from the inner membrane to the periplasmic chaperone, LolA. Responsible for the formation of the LolA-lipoprotein complex in an ATP-dependent manner. The sequence is that of Lipoprotein-releasing system ATP-binding protein LolD from Mesorhizobium japonicum (strain LMG 29417 / CECT 9101 / MAFF 303099) (Mesorhizobium loti (strain MAFF 303099)).